Here is a 154-residue protein sequence, read N- to C-terminus: Prefoldin subunit 2 (154 aa).

Residues 1–18 (MAENGGRAGKSSGSGTGK) show a composition bias toward gly residues. 2 disordered regions span residues 1–20 (MAENGGRAGKSSGSGTGKGA) and 124–154 (IRLMGEDEKPAAKENSEGAGAKASSAGVLVS). Residues 124–139 (IRLMGEDEKPAAKENS) are compositionally biased toward basic and acidic residues. Positions 140-154 (EGAGAKASSAGVLVS) are enriched in low complexity.

This sequence belongs to the prefoldin subunit beta family. As to quaternary structure, heterohexamer of two PFD-alpha type and four PFD-beta type subunits. Component of the PAQosome complex which is responsible for the biogenesis of several protein complexes and which consists of R2TP complex members RUVBL1, RUVBL2, RPAP3 and PIH1D1, URI complex members PFDN2, PFDN6, PDRG1, UXT and URI1 as well as ASDURF, POLR2E and DNAAF10/WDR92. Interacts with URI1; the interaction is phosphorylation-dependent and occurs in a growth-dependent manner.

Its subcellular location is the nucleus. The protein localises to the cytoplasm. The protein resides in the mitochondrion. Functionally, binds specifically to cytosolic chaperonin (c-CPN) and transfers target proteins to it. Binds to nascent polypeptide chain and promotes folding in an environment in which there are many competing pathways for nonnative proteins. This chain is Prefoldin subunit 2 (PFDN2), found in Bos taurus (Bovine).